We begin with the raw amino-acid sequence, 1462 residues long: Glucosyltransferase-S (1462 aa).

Residues Ser35 to Asn164 form a disordered region. Residues Val37 to Gln52 show a composition bias toward polar residues. Residues Thr71–Ala85 are compositionally biased toward low complexity. Residues Asn86 to Asn108 are compositionally biased toward polar residues. Residues Ser109 to Glu133 are compositionally biased toward basic and acidic residues. A compositionally biased stretch (low complexity) spans Glu134 to Ala149. Positions Gln154–Lys163 are enriched in polar residues. Cell wall-binding repeat units lie at residues Ile171–Pro190, Lys192–Ala211, Ser1095–Ala1115, Lys1116–Met1136, Val1137–Gln1156, Ser1180–Met1201, Ala1202–Gln1221, Lys1223–Met1244, Val1246–Ala1266, Leu1267–Gln1286, Arg1310–Ala1330, Val1331–Gln1350, Lys1352–Leu1372, and Val1374–Ala1394.

This sequence belongs to the glycosyl hydrolase 70 family.

The protein localises to the secreted. The catalysed reaction is [(1-&gt;6)-alpha-D-glucosyl](n) + sucrose = [(1-&gt;6)-alpha-D-glucosyl](n+1) + D-fructose. Its function is as follows. Production of extracellular glucans, that are thought to play a key role in the development of the dental plaque because of their ability to adhere to smooth surfaces and mediate the aggregation of bacterial cells and food debris. The polypeptide is Glucosyltransferase-S (gtfD) (Streptococcus mutans serotype c (strain ATCC 700610 / UA159)).